The following is a 145-amino-acid chain: Maximins 3/H3 type 2 (145 aa).

A signal peptide spans 1–18 (MNFKYIVAVSFLIASAYA). 2 propeptides span residues 19–43 (RSVQ…LREI) and 74–124 (RTAE…KEKR). Isoleucine 144 is subject to Isoleucine amide.

It belongs to the bombinin family. In terms of tissue distribution, expressed by the skin glands.

Its subcellular location is the secreted. Its function is as follows. Maximin-3 shows antibacterial activity against both Gram-positive and Gram-negative bacteria. It also shows antimicrobial activity against the fungus C.albicans, but not against A.flavus nor P.uticale. It has little hemolytic activity. It possess a significant cytotoxicity against tumor cell lines. It possess a significant anti-HIV activity. It shows high spermicidal activity. In terms of biological role, maximin-H3 shows antibacterial activity against both Gram-positive and Gram-negative bacteria. It also shows antimicrobial activity against the fungus C.albicans. Shows strong hemolytic activity. This chain is Maximins 3/H3 type 2, found in Bombina maxima (Giant fire-bellied toad).